A 42-amino-acid chain; its full sequence is Potassium channel toxin gamma-KTx 1.6 (42 aa).

4 cysteine pairs are disulfide-bonded: Cys5–Cys23, Cys11–Cys34, Cys20–Cys39, and Cys24–Cys41.

It belongs to the ergtoxin family. Gamma-KTx 1 subfamily. Expressed by the venom gland.

Its subcellular location is the secreted. Functionally, blocks Kv11/ERG potassium channels. The protein is Potassium channel toxin gamma-KTx 1.6 of Centruroides exilicauda (Bark scorpion).